A 452-amino-acid chain; its full sequence is Bis(5'-adenosyl)-triphosphatase enpp4 (452 aa).

Positions 1-19 are cleaved as a signal peptide; sequence MFGRVFIVAVLYCITICKG. Residues 20-407 are Extracellular-facing; that stretch reads EDPTNSSTPK…NQWCIQVSEA (388 aa). N24 is a glycosylation site (N-linked (GlcNAc...) asparagine). Residues D36 and T72 each contribute to the Zn(2+) site. T72 functions as the AMP-threonine intermediate in the catalytic mechanism. N93 is a binding site for substrate. An N-linked (GlcNAc...) asparagine glycan is attached at N107. Y154 serves as a coordination point for substrate. N-linked (GlcNAc...) asparagine glycans are attached at residues N155 and N175. Positions 189 and 193 each coordinate Zn(2+). D189 serves as a coordination point for substrate. Residue N202 is glycosylated (N-linked (GlcNAc...) asparagine). D237 and H238 together coordinate Zn(2+). The cysteines at positions 254 and 287 are disulfide-linked. N-linked (GlcNAc...) asparagine glycans are attached at residues N259 and N327. H336 serves as a coordination point for Zn(2+). A glycan (N-linked (GlcNAc...) asparagine) is linked at N386. Cysteines 394 and 401 form a disulfide. A helical transmembrane segment spans residues 408–428; that stretch reads IGIVIGAIMVLTTLTCIIIML. At 429–452 the chain is on the cytoplasmic side; sequence KKKMPSARPFSRLQFQDDDDPLIG.

The protein belongs to the nucleotide pyrophosphatase/phosphodiesterase family. Zn(2+) is required as a cofactor.

The protein resides in the cell membrane. It catalyses the reaction P(1),P(3)-bis(5'-adenosyl) triphosphate + H2O = AMP + ADP + 2 H(+). Functionally, hydrolyzes extracellular Ap3A into AMP and ADP, and Ap4A into AMP and ATP. Ap3A and Ap4A are diadenosine polyphosphates thought to induce proliferation of vascular smooth muscle cells. Acts as a procoagulant, mediating platelet aggregation at the site of nascent thrombus via release of ADP from Ap3A and activation of ADP receptors. This is Bis(5'-adenosyl)-triphosphatase enpp4 (enpp4) from Xenopus laevis (African clawed frog).